Consider the following 371-residue polypeptide: Palmitoyl-monogalactosyldiacylglycerol delta-7 desaturase, chloroplastic (371 aa).

A chloroplast-targeting transit peptide spans 1-67; sequence MASLLTKPKP…KGLKRDVTTA (67 aa). Helical transmembrane passes span 103–123 and 127–147; these read FGAV…PFQF and AVSV…TLSF. The Histidine box-1 signature appears at 148-153; that stretch reads HRNLSH. Positions 185 to 189 match the Histidine box-2 motif; the sequence is HRYHH. Residues 251–271 form a helical membrane-spanning segment; it reads ALAVALYAMGGFPFIVWGMGV. Residues 317-321 carry the Histidine box-3 motif; sequence HNNHH.

It belongs to the fatty acid desaturase type 1 family. The cofactor is Fe(2+). In terms of tissue distribution, highly expressed in young leaves. Low expression in roots.

Its subcellular location is the plastid. It localises to the chloroplast membrane. The catalysed reaction is a 1-acyl-2-hexadecanoyl-glycerolipid + 2 reduced [2Fe-2S]-[ferredoxin] + O2 + 2 H(+) = a 1-acyl-2-[(7Z)-hexadecenoyl]-glycerolipid + 2 oxidized [2Fe-2S]-[ferredoxin] + 2 H2O. It participates in lipid metabolism; oxylipin biosynthesis. It functions in the pathway lipid metabolism; polyunsaturated fatty acid biosynthesis. In terms of biological role, fatty acid desaturase involved in the first desaturation step leading to the formation of hexadeca 7,10,13-trienoic acid (16:3(7Z,10Z,13Z)), the major functional components of thylakoid membranes. Required for chloroplast biogenesis at low temperature. Also indirectly involved in the production of the oxylipin dinor-oxo-phyto-dienoic acid implicated in wound signaling. The protein is Palmitoyl-monogalactosyldiacylglycerol delta-7 desaturase, chloroplastic of Arabidopsis thaliana (Mouse-ear cress).